We begin with the raw amino-acid sequence, 446 residues long: Probable tRNA modification GTPase MnmE (446 aa).

(6S)-5-formyl-5,6,7,8-tetrahydrofolate is bound by residues Arg-28, Glu-87, and Arg-126. The TrmE-type G domain maps to 218 to 373 (GIQVALLGPA…LKQLIWQQAT (156 aa)). Asn-228 contacts K(+). GTP contacts are provided by residues 228–233 (NAGKST), 247–253 (TPIAGTT), and 272–275 (DTAG). Ser-232 contacts Mg(2+). The K(+) site is built by Thr-247, Ile-249, and Thr-252. Residue Thr-253 participates in Mg(2+) binding. Residue Lys-446 coordinates (6S)-5-formyl-5,6,7,8-tetrahydrofolate.

Belongs to the TRAFAC class TrmE-Era-EngA-EngB-Septin-like GTPase superfamily. TrmE GTPase family. The cofactor is K(+).

The protein localises to the plastid. The protein resides in the chloroplast. In terms of biological role, exhibits a very high intrinsic GTPase hydrolysis rate. Involved in the addition of a carboxymethylaminomethyl (cmnm) group at the wobble position (U34) of certain tRNAs, forming tRNA-cmnm(5)s(2)U34. The protein is Probable tRNA modification GTPase MnmE of Cyanidioschyzon merolae (strain NIES-3377 / 10D) (Unicellular red alga).